The chain runs to 839 residues: Periplasmic nitrate reductase (839 aa).

A signal peptide (tat-type signal) is located at residues 1–34 (MTLTRRDFIKANAAAAAATAAAVNLPLVPSMAQA). In terms of domain architecture, 4Fe-4S Mo/W bis-MGD-type spans 46–102 (IKWDKAACRFCGTGCSVLVGTKGGRVVATQGDPDAPVNRGLNCIKGYFLSKIMYGED). Cys53, Cys56, Cys60, and Cys88 together coordinate [4Fe-4S] cluster. Mo-bis(molybdopterin guanine dinucleotide) contacts are provided by residues Lys90, Gln157, Asn182, Cys186, 219–226 (WGSNMAEM), 250–254 (STYEH), 269–271 (QTD), Met379, Gln383, Asn489, 515–516 (SD), Lys538, Asp565, and 729–738 (TGRVLEHWHT). Residue Phe805 coordinates substrate. Mo-bis(molybdopterin guanine dinucleotide) is bound by residues Asn813 and Lys830.

This sequence belongs to the prokaryotic molybdopterin-containing oxidoreductase family. NasA/NapA/NarB subfamily. Component of the periplasmic nitrate reductase NapAB complex composed of NapA and NapB. [4Fe-4S] cluster is required as a cofactor. Requires Mo-bis(molybdopterin guanine dinucleotide) as cofactor. In terms of processing, predicted to be exported by the Tat system. The position of the signal peptide cleavage has not been experimentally proven.

The protein resides in the periplasm. It catalyses the reaction 2 Fe(II)-[cytochrome] + nitrate + 2 H(+) = 2 Fe(III)-[cytochrome] + nitrite + H2O. Its function is as follows. Catalytic subunit of the periplasmic nitrate reductase complex NapAB. Receives electrons from NapB and catalyzes the reduction of nitrate to nitrite. This Laribacter hongkongensis (strain HLHK9) protein is Periplasmic nitrate reductase.